The chain runs to 374 residues: Glutamate 5-kinase (374 aa).

Residue K16 participates in ATP binding. Substrate contacts are provided by S56, D143, and N155. 175–176 serves as a coordination point for ATP; the sequence is TD. The region spanning 282–360 is the PUA domain; sequence RGRVVLDAGA…SEIEAVLGYV (79 aa).

Belongs to the glutamate 5-kinase family.

It is found in the cytoplasm. It carries out the reaction L-glutamate + ATP = L-glutamyl 5-phosphate + ADP. It functions in the pathway amino-acid biosynthesis; L-proline biosynthesis; L-glutamate 5-semialdehyde from L-glutamate: step 1/2. Catalyzes the transfer of a phosphate group to glutamate to form L-glutamate 5-phosphate. This is Glutamate 5-kinase from Ralstonia pickettii (strain 12J).